A 141-amino-acid polypeptide reads, in one-letter code: Hemoglobin subunit alpha-D (141 aa).

Residues methionine 1–arginine 141 form the Globin domain. The heme b site is built by histidine 58 and histidine 87.

This sequence belongs to the globin family. In terms of assembly, heterotetramer of two alpha-D chains and two beta chains. As to expression, red blood cells.

In terms of biological role, involved in oxygen transport from the lung to the various peripheral tissues. The protein is Hemoglobin subunit alpha-D (HBAD) of Chloephaga melanoptera (Andean goose).